The chain runs to 100 residues: Large ribosomal subunit protein bL27 (100 aa).

A propeptide spanning residues 1-9 (MLVMNLQLF) is cleaved from the precursor.

It belongs to the bacterial ribosomal protein bL27 family. In terms of processing, the N-terminus is cleaved by ribosomal processing cysteine protease Prp.

In Clostridium botulinum (strain Hall / ATCC 3502 / NCTC 13319 / Type A), this protein is Large ribosomal subunit protein bL27.